The sequence spans 461 residues: Asparagine--tRNA ligase (461 aa).

It belongs to the class-II aminoacyl-tRNA synthetase family. In terms of assembly, homodimer.

It is found in the cytoplasm. It carries out the reaction tRNA(Asn) + L-asparagine + ATP = L-asparaginyl-tRNA(Asn) + AMP + diphosphate + H(+). This chain is Asparagine--tRNA ligase, found in Geobacter sulfurreducens (strain ATCC 51573 / DSM 12127 / PCA).